Here is a 265-residue protein sequence, read N- to C-terminus: RNA-binding protein 7 (265 aa).

N-acetylglycine is present on glycine 2. Positions 10-87 (RTLFVGNLET…RPIKIQFRSG (78 aa)) constitute an RRM domain. ZCCHC8 binding regions lie at residues 25–35 (LLFELFHQAGP) and 59–76 (HEVS…IKLF). Positions 91–125 (ASQDASVSYPQHHVGNLSPTSTSPNSYERTVGNVS) are disordered. Residues 107 to 125 (LSPTSTSPNSYERTVGNVS) show a composition bias toward polar residues. Position 136 is a phosphoserine; by MAPKAPK2 (serine 136). Residue serine 137 is modified to Phosphoserine. An Omega-N-methylarginine modification is found at arginine 152. 2 disordered regions span residues 166-224 (DQLG…HGSD) and 237-265 (DDRN…SSRH). The segment covering 170 to 196 (FSPSAQPHGHTFNQSSSSQWRQDALSS) has biased composition (polar residues). The residue at position 203 (serine 203) is a Phosphoserine. Basic and acidic residues-rich tracts occupy residues 207-224 (LADR…HGSD) and 237-256 (DDRN…DSSR).

As to quaternary structure, component of the nuclear exosome targeting (NEXT) complex composed of MTREX, ZCCHC8, and RBM7 that directs a subset of non-coding short-lived RNAs for exosomal degradation. Interacts with ZCCHC8 and SF3B2/SAP145. Binds to MTREX through ZCCHC8. Interacts with YWHAE and YWHAZ; these interactions are stress-dependent and RBM7 phosphorylation dependent; release RNA from the NEXT complex and may affect RNA targeting to the nuclear RNA exosomome for degradation. Interacts with MEPCE and LARP7, the core subunits of 7SK snRNP; upon genotoxic stress this interaction is enhanced, triggering the release of inactive P-TEFb complex from the core and P-TEFb complex activation. In terms of processing, phosphorylated at Ser-136 by MAPK14/p38-alpha-activated MAPKAPK2/MK2; this phosphorylation is stress-dependent; this phosphorylation decreases its RNA-binding capacity therefore affecting RNA nuclear exosome-mediated degradation. This phosphorylation mediates YWHAE and YWHAZ interactions.

It localises to the nucleus. The protein localises to the nucleoplasm. Its function is as follows. RNA-binding subunit of the trimeric nuclear exosome targeting (NEXT) complex, a complex that functions as an RNA exosome cofactor that directs a subset of non-coding short-lived RNAs for exosomal degradation. NEXT is involved in surveillance and turnover of aberrant transcripts and non-coding RNAs. Binds preferentially polyuridine sequences and associates with newly synthesized RNAs, including pre-mRNAs and short-lived exosome substrates such as promoter upstream transcripts (PROMPTs), enhancer RNAs (eRNAs), and 3'-extended products from small nuclear RNAs (snRNAs). Participates in several biological processes including DNA damage response (DDR) and stress response. During stress response, activation of the p38MAPK-MK2 pathway decreases RBM7-RNA-binding and subsequently the RNA exosome degradation activities, thereby modulating the turnover of non-coding transcriptome. Participates in DNA damage response (DDR), through its interaction with MEPCE and LARP7, the core subunits of 7SK snRNP complex, that release the positive transcription elongation factor b (P-TEFb) complex from the 7SK snRNP. In turn, activation of P-TEFb complex induces the transcription of P-TEFb-dependent DDR genes to promote cell viability. The sequence is that of RNA-binding protein 7 from Mus musculus (Mouse).